We begin with the raw amino-acid sequence, 264 residues long: 3-methyl-2-oxobutanoate hydroxymethyltransferase (264 aa).

2 residues coordinate Mg(2+): Asp45 and Asp84. 3-methyl-2-oxobutanoate contacts are provided by residues 45 to 46, Asp84, and Lys112; that span reads DS. Glu114 serves as a coordination point for Mg(2+). The active-site Proton acceptor is the Glu181.

It belongs to the PanB family. As to quaternary structure, homodecamer; pentamer of dimers. Requires Mg(2+) as cofactor.

The protein resides in the cytoplasm. It carries out the reaction 3-methyl-2-oxobutanoate + (6R)-5,10-methylene-5,6,7,8-tetrahydrofolate + H2O = 2-dehydropantoate + (6S)-5,6,7,8-tetrahydrofolate. The protein operates within cofactor biosynthesis; (R)-pantothenate biosynthesis; (R)-pantoate from 3-methyl-2-oxobutanoate: step 1/2. Catalyzes the reversible reaction in which hydroxymethyl group from 5,10-methylenetetrahydrofolate is transferred onto alpha-ketoisovalerate to form ketopantoate. The chain is 3-methyl-2-oxobutanoate hydroxymethyltransferase from Shewanella oneidensis (strain ATCC 700550 / JCM 31522 / CIP 106686 / LMG 19005 / NCIMB 14063 / MR-1).